A 709-amino-acid polypeptide reads, in one-letter code: Protein white (709 aa).

The tract at residues 1–35 (MTINTDDQYADGESKTTISSNRRYSTSSFQDQSME) is disordered. Residues 15-32 (KTTISSNRRYSTSSFQDQ) are compositionally biased toward polar residues. Residues 103-348 (FTRQRLVKDF…SQLGIPCPPN (246 aa)) enclose the ABC transporter domain. ATP is bound by residues 136–143 (GSSGAGKT) and 292–299 (GMAMKGKT). The helical transmembrane segment at 457 to 475 (LLQTAMVASLIGSIYFGQV) threads the bilayer. A glycan (N-linked (GlcNAc...) asparagine) is linked at Asn-485. 4 helical membrane passes run 487–507 (SLFL…INVF), 537–555 (LPLF…YPMI), 564–585 (YLTT…GYLI), and 598–616 (VGPP…FLNS). Asn-658 carries an N-linked (GlcNAc...) asparagine glycan. Residues 681 to 700 (LDIGCLFALIVLFRLGALFC) traverse the membrane as a helical segment.

Belongs to the ABC transporter superfamily. ABCG family. Eye pigment precursor importer (TC 3.A.1.204) subfamily.

The protein resides in the membrane. In terms of biological role, may be part of a membrane-spanning permease system necessary for the transport of pigment precursors into pigment cells responsible for eye color. The polypeptide is Protein white (W) (Anopheles albimanus (New world malaria mosquito)).